The primary structure comprises 360 residues: DNA integrity scanning protein DisA (360 aa).

The 139-residue stretch at 9-147 folds into the DAC domain; sequence DDEIIEVLRM…GSRKYILRET (139 aa). ATP contacts are provided by residues glycine 76, leucine 94, and 107–111; that span reads TRHKT.

The protein belongs to the DisA family. Homooctamer. Requires Mg(2+) as cofactor.

It catalyses the reaction 2 ATP = 3',3'-c-di-AMP + 2 diphosphate. Its function is as follows. Participates in a DNA-damage check-point that is active prior to asymmetric division when DNA is damaged. DisA forms globular foci that rapidly scan along the chromosomes during sporulation, searching for lesions. When a lesion is present, DisA pauses at the lesion site. This triggers a cellular response that culminates in a temporary block in sporulation initiation. Functionally, also has diadenylate cyclase activity, catalyzing the condensation of 2 ATP molecules into cyclic di-AMP (c-di-AMP). c-di-AMP acts as a signaling molecule that couples DNA integrity with progression of sporulation. The rise in c-di-AMP level generated by DisA while scanning the chromosome, operates as a positive signal that advances sporulation; upon encountering a lesion, the DisA focus arrests at the damaged site and halts c-di-AMP synthesis. The chain is DNA integrity scanning protein DisA from Acetivibrio thermocellus (strain ATCC 27405 / DSM 1237 / JCM 9322 / NBRC 103400 / NCIMB 10682 / NRRL B-4536 / VPI 7372) (Clostridium thermocellum).